Consider the following 374-residue polypeptide: Coiled-coil domain-containing protein 89 (374 aa).

The tract at residues 1–38 (MRAPMPQKEQAPRMDTSPPEERLEKQNEKLNNQEEEME) is disordered. The residue at position 16 (threonine 16) is a Phosphothreonine. The span at 19–32 (PEERLEKQNEKLNN) shows a compositional bias: basic and acidic residues. Residues 19 to 350 (PEERLEKQNE…YDELRLQSEA (332 aa)) are a coiled coil.

It belongs to the CCDC89 family. As to quaternary structure, interacts with HEY1.

The protein localises to the cytoplasm. It is found in the nucleus. This is Coiled-coil domain-containing protein 89 (CCDC89) from Macaca fascicularis (Crab-eating macaque).